Reading from the N-terminus, the 269-residue chain is Phosphonates import ATP-binding protein PhnC (269 aa).

Positions 2–245 constitute an ABC transporter domain; sequence LVVEGLTCRF…VARELYDLEA (244 aa). 34-41 lines the ATP pocket; sequence GRSGAGKS.

The protein belongs to the ABC transporter superfamily. Phosphonates importer (TC 3.A.1.9.1) family. The complex is composed of two ATP-binding proteins (PhnC), two transmembrane proteins (PhnE) and a solute-binding protein (PhnD).

The protein resides in the cell inner membrane. It catalyses the reaction phosphonate(out) + ATP + H2O = phosphonate(in) + ADP + phosphate + H(+). Its function is as follows. Part of the ABC transporter complex PhnCDE involved in phosphonates import. Responsible for energy coupling to the transport system. The chain is Phosphonates import ATP-binding protein PhnC from Bradyrhizobium diazoefficiens (strain JCM 10833 / BCRC 13528 / IAM 13628 / NBRC 14792 / USDA 110).